The chain runs to 429 residues: TNFAIP3-interacting protein 2 (429 aa).

Phosphoserine is present on S7. Residues 29 to 117 (QRLRRLQDQL…MQQLLSQPQH (89 aa)) are a coiled coil. Residues 177 to 195 (HAQRNVGERSPDQSEHTDG) are compositionally biased toward basic and acidic residues. Residues 177-199 (HAQRNVGERSPDQSEHTDGHTSV) form a disordered region. 2 coiled-coil regions span residues 196-226 (HTSVQSVIEKLQEENRLLKQKVTHVEDLNAK) and 255-340 (ELMR…QVSW). Residues 289 to 347 (RDAALERVQMLEQQILAYKDDFMSERADRERAQSRIQELEEKVASLLHQVSWRQDSREP) form a ubiquitin-binding domain (UBD) region. The interval 372–400 (PGGWRPGTGSQQPEPPAEGGHPGAAQRGQ) is disordered. A compositionally biased stretch (low complexity) spans 388–397 (AEGGHPGAAQ). Residues 397-429 (QRGQGDLQCPHCLQCFSDEQGEELLRHVAECCQ) form a CCHC NOA-type zinc finger. Residues C405, C408, H423, and C427 each contribute to the Zn(2+) site.

Interacts with STK11/LKB1, TNFAIP3, IKBKG, NFKB1, MAP3K8, TEK, RIPK1, CHUK, IKBKB and SMARCD1. Interacts with polyubiquitin. In terms of assembly, (Microbial infection) Interacts with severe fever with thrombocytopenia syndrome virus (SFTSV) NSs; this interaction promotes TPL2 complex formation and signaling activity leading to IL-10 production. Post-translationally, in vitro phosphorylated by CHUK. In terms of processing, ubiquitinated; undergoes 'Lys-48'-linked polyubiquitination probably leading to constitutive proteasomal degradation which can be impaired by IKK-A/CHUK or IKBKB probably involving deubiquitination. Deubiquitinated by USP35; leading to stabilization and inhibition of TNFalpha-induced NF-kappa-B activation. Ubiquitously expressed in all tissues examined.

It is found in the cytoplasm. The protein resides in the nucleus. Functionally, inhibits NF-kappa-B activation by blocking the interaction of RIPK1 with its downstream effector NEMO/IKBKG. Forms a ternary complex with NFKB1 and MAP3K8 but appears to function upstream of MAP3K8 in the TLR4 signaling pathway that regulates MAP3K8 activation. Involved in activation of the MEK/ERK signaling pathway during innate immune response; this function seems to be stimulus- and cell type specific. Required for stability of MAP3K8. Involved in regulation of apoptosis in endothelial cells; promotes TEK agonist-stimulated endothelial survival. May act as transcriptional coactivator when translocated to the nucleus. Enhances CHUK-mediated NF-kappa-B activation involving NF-kappa-B p50-p65 and p50-c-Rel complexes. This is TNFAIP3-interacting protein 2 from Homo sapiens (Human).